The sequence spans 66 residues: Clusterin (66 aa).

This sequence belongs to the clusterin family. Antiparallel disulfide-linked heterodimer of an alpha chain and a beta chain. Self-associates and forms higher oligomers. Interacts with a broad range of misfolded proteins, including APP, APOC2 and LYZ. Slightly acidic pH promotes interaction with misfolded proteins. Forms high-molecular weight oligomers upon interaction with misfolded proteins. Interacts with APOA1, LRP2, CLUAP1 and PON1. Interacts with the complement membrane attack complex. Interacts (via alpha chain) with XRCC6. Interacts with SYVN1, COMMD1, BTRC, CUL1 and with ubiquitin and SCF (SKP1-CUL1-F-box protein) E3 ubiquitin-protein ligase complexes. Interacts (via alpha chain) with BAX in stressed cells, where BAX undergoes a conformation change leading to association with the mitochondrial membrane. Does not interact with BAX in unstressed cells. Found in a complex with LTF, CLU, EPPIN and SEMG1. Interacts (immaturely glycosylated pre-secreted form) with HSPA5; this interaction promotes CLU stability and facilitates stress-induced CLU retrotranslocation from the secretory pathway to the mitochondria, thereby reducing stress-induced apoptosis by stabilizing mitochondrial membrane integrity. Interacts with BCL2L1; this interaction releases and activates BAX and promotes cell death. Interacts with TGFBR2 and ACVR1. Interacts (secreted form) with STMN3; this interaction may act as an important modulator during neuronal differentiation. Component of a epididymal complex at least composed of soluble form of prion protein PRNP, CLU, BPI, CES5A, MANBA and GLB1. Post-translationally, proteolytically cleaved on its way through the secretory system, probably within the Golgi lumen. Proteolytic cleavage is not necessary for its chaperone activity. All non-secreted forms are not proteolytically cleaved. Chaperone activity of uncleaved forms is dependent on a non-reducing environment. Polyubiquitinated, leading to proteasomal degradation. Under cellular stress, the intracellular level of cleaved form is reduced due to proteasomal degradation. In terms of processing, heavily N-glycosylated. About 30% of the protein mass is comprised of complex N-linked carbohydrate. Endoplasmic reticulum (ER) stress induces changes in glycosylation status and increases level of hypoglycosylated forms. Core carbohydrates are essential for chaperone activity. Non-secreted forms are hypoglycosylated or unglycosylated.

The protein resides in the secreted. It localises to the nucleus. Its subcellular location is the cytoplasm. It is found in the mitochondrion membrane. The protein localises to the cytosol. The protein resides in the microsome. It localises to the endoplasmic reticulum. Its subcellular location is the mitochondrion. It is found in the perinuclear region. The protein localises to the cytoplasmic vesicle. The protein resides in the secretory vesicle. It localises to the chromaffin granule. Its function is as follows. Functions as extracellular chaperone that prevents aggregation of non native proteins. Prevents stress-induced aggregation of blood plasma proteins. Inhibits formation of amyloid fibrils by APP, APOC2, B2M, CALCA, CSN3, SNCA and aggregation-prone LYZ variants (in vitro). Does not require ATP. Maintains partially unfolded proteins in a state appropriate for subsequent refolding by other chaperones, such as HSPA8/HSC70. Does not refold proteins by itself. Binding to cell surface receptors triggers internalization of the chaperone-client complex and subsequent lysosomal or proteasomal degradation. When secreted, protects cells against apoptosis and against cytolysis by complement: inhibits assembly of the complement membrane attack complex (MAC) by preventing polymerization of C9 pore component of the MAC complex. Intracellular forms interact with ubiquitin and SCF (SKP1-CUL1-F-box protein) E3 ubiquitin-protein ligase complexes and promote the ubiquitination and subsequent proteasomal degradation of target proteins. Promotes proteasomal degradation of COMMD1 and IKBKB. Modulates NF-kappa-B transcriptional activity. Following stress, promotes apoptosis. Inhibits apoptosis when associated with the mitochondrial membrane by interference with BAX-dependent release of cytochrome c into the cytoplasm. Plays a role in the regulation of cell proliferation. An intracellular form suppresses stress-induced apoptosis by stabilizing mitochondrial membrane integrity through interaction with HSPA5. Secreted form does not affect caspase or BAX-mediated intrinsic apoptosis and TNF-induced NF-kappa-B-activity. Secreted form act as an important modulator during neuronal differentiation through interaction with STMN3. Plays a role in the clearance of immune complexes that arise during cell injury. This chain is Clusterin (CLU), found in Ovis aries (Sheep).